A 172-amino-acid polypeptide reads, in one-letter code: Zinc finger protein 580 (172 aa).

Residues 1–92 are disordered; it reads MLLLPPRPPH…PGEPGPRKGY (92 aa). Positions 19–30 are enriched in pro residues; sequence MDPPPPKTPPFP. Lys31 is covalently cross-linked (Glycyl lysine isopeptide (Lys-Gly) (interchain with G-Cter in SUMO2)). The C2H2-type 1 zinc-finger motif lies at 92–114; that stretch reads YSCPECARVFASPLRLQSHRVSH. A Glycyl lysine isopeptide (Lys-Gly) (interchain with G-Cter in SUMO2) cross-link involves residue Lys118. 2 C2H2-type zinc fingers span residues 120 to 142 and 150 to 172; these read FTCGACGKAFKRSSHLSRHRATH and HTCPLCPRRFQDAAELAQHVRLH.

As to quaternary structure, interacts with SMAD2.

The protein localises to the nucleus. Functionally, involved in the regulation of endothelial cell proliferation and migration. Mediates H(2)O(2)-induced leukocyte chemotaxis by elevating interleukin-8 production and may play a role in inflammation. May be involved in transcriptional regulation. The sequence is that of Zinc finger protein 580 (Znf580) from Mus musculus (Mouse).